We begin with the raw amino-acid sequence, 402 residues long: MRYNSNYLMYFCLVLGIFANIYVIIKITLGSSHILEYFQKNSNLSPKCEINVNNLLSFIENRHFLDLEQKNSQKSQPNYEKTLQLMLFAFPSGGLGNKLFEIISLHGIATSLQRKAVINATNPSFIETLNRNIQPLFPKLADQFTLRIIPDSLVTHQQTNWGRCCVYDDPSRFLNRSDQNLILDGHYFQSFKYFHHIRPQVREWLAPSKLQAMRAEILLPAKFRDDFLICTHVRRGDFQYDGLHRPSDATFTRAATDFLVDLYRKSHERVNVVVLGNDIHFAYTVFEDRVAHFTFLQKPVNNSYDYSLPQISPSYTAILTPTLTPEIDLAFSRLFCDVTLITAPSSTFGWWLSYLAKRTATTYYRDILESKDGVAGEMHPEDFYPPEWIKLKTDLNGKISKY.

Over 1–6 (MRYNSN) the chain is Cytoplasmic. A helical; Signal-anchor for type II membrane protein transmembrane segment spans residues 7-27 (YLMYFCLVLGIFANIYVIIKI). Topologically, residues 28 to 402 (TLGSSHILEY…TDLNGKISKY (375 aa)) are lumenal. 3 N-linked (GlcNAc...) asparagine glycosylation sites follow: asparagine 119, asparagine 175, and asparagine 301.

Belongs to the glycosyltransferase 11 family. May form oligomers. Post-translationally, N-glycosylated. In terms of tissue distribution, expression is restricted to pharyngeal neurons and gland cells.

It localises to the golgi apparatus. Its subcellular location is the golgi stack membrane. The protein operates within protein modification; protein glycosylation. Selectively catalyzes the addition of fucose in alpha 1-2 linkage to Gal-beta-(1-&gt;3)-GalNAc-alpha-R, Gal-beta-(1-&gt;3)-(GlcNAc-beta-(1-&gt;6))-GalNAc-alpha-R and Gal-beta-(1-&gt;3)-GalNAc acceptors but not Gal-beta-(1-&gt;3)-GlcNAc-beta-(1-&gt;3)-Gal-beta-(1-&gt;4)-Glc in vitro. The chain is Galactoside 2-alpha-L-fucosyltransferase from Caenorhabditis elegans.